The primary structure comprises 429 residues: Adenylosuccinate synthetase (429 aa).

GTP is bound by residues 12 to 18 and 40 to 42; these read GDEGKGK and GHT. Residue Asp13 is the Proton acceptor of the active site. Mg(2+) contacts are provided by Asp13 and Gly40. Residues 13 to 16, 38 to 41, Thr129, Arg143, Gln223, Thr238, and Arg302 each bind IMP; these read DEGK and NAGH. His41 acts as the Proton donor in catalysis. 298–304 serves as a coordination point for substrate; that stretch reads VVTGRKR. Residues Arg304, 330-332, and 412-414 each bind GTP; these read KLD and STS.

The protein belongs to the adenylosuccinate synthetase family. In terms of assembly, homodimer. Requires Mg(2+) as cofactor.

It localises to the cytoplasm. It carries out the reaction IMP + L-aspartate + GTP = N(6)-(1,2-dicarboxyethyl)-AMP + GDP + phosphate + 2 H(+). It functions in the pathway purine metabolism; AMP biosynthesis via de novo pathway; AMP from IMP: step 1/2. Functionally, plays an important role in the de novo pathway of purine nucleotide biosynthesis. Catalyzes the first committed step in the biosynthesis of AMP from IMP. This Bartonella henselae (strain ATCC 49882 / DSM 28221 / CCUG 30454 / Houston 1) (Rochalimaea henselae) protein is Adenylosuccinate synthetase.